The chain runs to 328 residues: Sulfate adenylyltransferase subunit 2 (328 aa).

The disordered stretch occupies residues 305 to 328 (ERQGRVIDRDSTGSMERKKAEGYF).

It belongs to the PAPS reductase family. CysD subfamily. Heterodimer composed of CysD, the smaller subunit, and CysN.

It carries out the reaction sulfate + ATP + H(+) = adenosine 5'-phosphosulfate + diphosphate. It participates in sulfur metabolism; hydrogen sulfide biosynthesis; sulfite from sulfate: step 1/3. With CysN forms the ATP sulfurylase (ATPS) that catalyzes the adenylation of sulfate producing adenosine 5'-phosphosulfate (APS) and diphosphate, the first enzymatic step in sulfur assimilation pathway. APS synthesis involves the formation of a high-energy phosphoric-sulfuric acid anhydride bond driven by GTP hydrolysis by CysN coupled to ATP hydrolysis by CysD. The polypeptide is Sulfate adenylyltransferase subunit 2 (Rhodopseudomonas palustris (strain BisB18)).